The sequence spans 248 residues: Probable transcriptional regulatory protein Ccel_0181 (248 aa).

This sequence belongs to the TACO1 family.

The protein resides in the cytoplasm. The chain is Probable transcriptional regulatory protein Ccel_0181 from Ruminiclostridium cellulolyticum (strain ATCC 35319 / DSM 5812 / JCM 6584 / H10) (Clostridium cellulolyticum).